The primary structure comprises 92 residues: Small ribosomal subunit protein uS19 (92 aa).

Belongs to the universal ribosomal protein uS19 family.

In terms of biological role, protein S19 forms a complex with S13 that binds strongly to the 16S ribosomal RNA. The chain is Small ribosomal subunit protein uS19 from Bacillus thuringiensis subsp. konkukian (strain 97-27).